An 83-amino-acid chain; its full sequence is Neurotoxin LmNaTx10 (83 aa).

The signal sequence occupies residues methionine 1–cysteine 19. The LCN-type CS-alpha/beta domain occupies lysine 21–histidine 80. 4 cysteine pairs are disulfide-bonded: cysteine 31-cysteine 79, cysteine 35-cysteine 55, cysteine 41-cysteine 62, and cysteine 45-cysteine 64.

This sequence belongs to the long (4 C-C) scorpion toxin superfamily. Sodium channel inhibitor family. Alpha subfamily. As to expression, expressed by the venom gland.

Its subcellular location is the secreted. Functionally, binds voltage-independently at site-3 of voltage-gated sodium channels (Nav) and inhibits the inactivation of the activated channels, thereby blocking neuronal transmission. The sequence is that of Neurotoxin LmNaTx10 from Lychas mucronatus (Chinese swimming scorpion).